The chain runs to 315 residues: Aspartate carbamoyltransferase catalytic subunit (315 aa).

Residues arginine 65 and threonine 66 each coordinate carbamoyl phosphate. Lysine 93 contacts L-aspartate. Carbamoyl phosphate contacts are provided by arginine 115, histidine 143, and glutamine 146. 2 residues coordinate L-aspartate: arginine 176 and arginine 231. Carbamoyl phosphate contacts are provided by glycine 272 and proline 273.

It belongs to the aspartate/ornithine carbamoyltransferase superfamily. ATCase family. Heterododecamer (2C3:3R2) of six catalytic PyrB chains organized as two trimers (C3), and six regulatory PyrI chains organized as three dimers (R2).

It catalyses the reaction carbamoyl phosphate + L-aspartate = N-carbamoyl-L-aspartate + phosphate + H(+). The protein operates within pyrimidine metabolism; UMP biosynthesis via de novo pathway; (S)-dihydroorotate from bicarbonate: step 2/3. In terms of biological role, catalyzes the condensation of carbamoyl phosphate and aspartate to form carbamoyl aspartate and inorganic phosphate, the committed step in the de novo pyrimidine nucleotide biosynthesis pathway. In Hyphomonas neptunium (strain ATCC 15444), this protein is Aspartate carbamoyltransferase catalytic subunit.